A 196-amino-acid polypeptide reads, in one-letter code: Protein TEX261 (196 aa).

5 helical membrane passes run 3-23 (FMYL…TLAV), 42-62 (SRII…LYVF), 70-90 (IGVG…FPFI), 97-117 (FILS…FFAE), and 125-145 (VLAY…VSLS).

It belongs to the SVP26 family.

It is found in the membrane. The sequence is that of Protein TEX261 (TEX261) from Pongo abelii (Sumatran orangutan).